The sequence spans 185 residues: Signal peptidase I (185 aa).

Residues 1–20 are Cytoplasmic-facing; sequence MKSEKEKTSKKSAVLDWAKA. Residues 21 to 41 form a helical membrane-spanning segment; it reads IIIAVVLAVLIRNFLFAPYVV. The Extracellular segment spans residues 42–185; it reads DGESMEPTLH…FPFNEIRKTK (144 aa). Active-site residues include Ser-45 and Lys-85.

It belongs to the peptidase S26 family.

The protein resides in the cell membrane. It carries out the reaction Cleavage of hydrophobic, N-terminal signal or leader sequences from secreted and periplasmic proteins.. This is Signal peptidase I (sipA) from Bacillus amyloliquefaciens (Bacillus velezensis).